Here is a 181-residue protein sequence, read N- to C-terminus: MEKLIESLSDAPIIDKDGYEYLVHPISNGVPMLDPDLLREVVVEVMQTADLDVDKIVAPEAMGIHLATALSLQTDIPLVVIRKRPYGLEGEVSLHQQTGYSESEMYINDVEEGDRVLIVDDMLSTGGTLAAICTALDDIGAEIVDIVVVLRKVGDSALDDTKFDATSLLDITVEDGDVTVH.

Belongs to the purine/pyrimidine phosphoribosyltransferase family. Archaeal HPRT subfamily.

In terms of biological role, may catalyze a purine salvage reaction, the substrate is unknown. This Haloterrigena turkmenica (strain ATCC 51198 / DSM 5511 / JCM 9101 / NCIMB 13204 / VKM B-1734 / 4k) (Halococcus turkmenicus) protein is HGPRTase-like protein 2.